The primary structure comprises 789 residues: SH3 domain-containing protein 19 (789 aa).

Disordered stretches follow at residues 24 to 170 (TNTE…PPRL), 209 to 404 (DDDV…RPKP), and 472 to 497 (TPLDERPRGRPNDSGHSQKPVDSGAP). Ser65 is subject to Phosphoserine. Basic and acidic residues predominate over residues 296 to 305 (SHSDRTRNPE). A compositionally biased stretch (pro residues) spans 335 to 351 (WRPPPKGAPERPPPPKL). Low complexity predominate over residues 352–361 (PASKSSNKNL). A Phosphoserine modification is found at Ser368. SH3 domains follow at residues 414 to 476 (LSVP…PLDE), 494 to 553 (SGAP…VIVD), 570 to 629 (AKGP…LVGD), 660 to 719 (PPGE…PCPA), and 729 to 788 (PKGR…FLQV). The segment covering 474–484 (LDERPRGRPND) has biased composition (basic and acidic residues). Positions 635-663 (ANILSTKVPPKTKNEDPGSNSQDSSPPGE) are disordered.

In terms of assembly, interacts with ADAM12. Isoform 2 (but not isoform 1) interacts with ADAM9, ADAM10, ADAM15 and ADAM17. Interacts with SH3GL1 SH3 domain. Interacts via SH3 3 and SH3 4 or SH3 4 and SH3 5 domains with SOS2. Probably forms a trimeric complex with SH3GL1 and SOS2. Interacts with SH3YL1. As to expression, expressed in hair follicles.

The protein localises to the cytoplasm. Its function is as follows. May play a role in regulating A disintegrin and metalloproteases (ADAMs) in the signaling of EGFR-ligand shedding. May be involved in suppression of Ras-induced cellular transformation and Ras-mediated activation of ELK1. Plays a role in the regulation of cell morphology and cytoskeletal organization. The sequence is that of SH3 domain-containing protein 19 (Sh3d19) from Mus musculus (Mouse).